The sequence spans 456 residues: 26S proteasome non-ATPase regulatory subunit 12 (456 aa).

An N-acetylalanine modification is found at alanine 2. A Glycyl lysine isopeptide (Lys-Gly) (interchain with G-Cter in SUMO1); alternate cross-link involves residue lysine 92. A Glycyl lysine isopeptide (Lys-Gly) (interchain with G-Cter in SUMO2); alternate cross-link involves residue lysine 92. N6-acetyllysine is present on residues lysine 221 and lysine 368. The region spanning 242–420 (SICKHYRAIY…GIINFQRPKD (179 aa)) is the PCI domain.

The protein belongs to the proteasome subunit p55 family. In terms of assembly, component of the 19S proteasome regulatory particle complex. The 26S proteasome consists of a 20S core particle (CP) and two 19S regulatory subunits (RP). The regulatory particle is made of a lid composed of 9 subunits including PSMD12, a base containing 6 ATPases and few additional components. Interacts with ERCC6.

Functionally, component of the 26S proteasome, a multiprotein complex involved in the ATP-dependent degradation of ubiquitinated proteins. This complex plays a key role in the maintenance of protein homeostasis by removing misfolded or damaged proteins, which could impair cellular functions, and by removing proteins whose functions are no longer required. Therefore, the proteasome participates in numerous cellular processes, including cell cycle progression, apoptosis, or DNA damage repair. In Homo sapiens (Human), this protein is 26S proteasome non-ATPase regulatory subunit 12 (PSMD12).